The sequence spans 161 residues: Large ribosomal subunit protein uL15 (161 aa).

The segment at 1–43 is disordered; sequence MKLSDIADNAGARKKRMRVGRGIGSGKGKTSGRGGKGQTARSG. A compositionally biased stretch (gly residues) spans 21–37; that stretch reads RGIGSGKGKTSGRGGKG.

This sequence belongs to the universal ribosomal protein uL15 family. In terms of assembly, part of the 50S ribosomal subunit.

Its function is as follows. Binds to the 23S rRNA. The polypeptide is Large ribosomal subunit protein uL15 (Bradyrhizobium sp. (strain BTAi1 / ATCC BAA-1182)).